The primary structure comprises 3608 residues: Serine-rich adhesin for platelets (3608 aa).

A signal peptide spans 1–91; sequence MSRKERNFKR…FAMLNDHHAY (91 aa). Positions 92 to 302 are serine-rich repeat region 1, SRR1; the sequence is AASETPMTSE…DSTSTSTSTA (211 aa). Disordered stretches follow at residues 105–280, 495–3575, and 3588–3608; these read NSET…SESQ, DPTS…SNST, and LGLF…GSEQ. Residues 114-201 show a composition bias toward low complexity; it reads STTVTKSETS…DNSTSNNSTT (88 aa). A compositionally biased stretch (polar residues) spans 209 to 220; that stretch reads QANTTSTDSQKG. Composition is skewed to low complexity over residues 221–234, 244–280, and 497–3545; these read STST…STST, TESN…SESQ, and TSTA…ESQS. The segment at 303 to 755 is non-repeat region (NRR); the sequence is PLKLRTFSRL…STSLSGSESA (453 aa). Positions 756–3567 are serine-rich repeat region 2, SRR2; the sequence is SLSDSASAST…HDAKDELPDT (2812 aa). Residues 3564-3568 carry the LPXTG sorting signal motif; that stretch reads LPDTG. The residue at position 3567 (Thr-3567) is a Pentaglycyl murein peptidoglycan amidated threonine. Residues 3568–3608 constitute a propeptide, removed by sortase; it reads GDSDSNSTGLVSAVAAMLAGLGLFGKSRKNKKDKKNKGSEQ. Residues 3593–3602 are compositionally biased toward basic residues; that stretch reads KSRKNKKDKK.

Belongs to the serine-rich repeat protein (SRRP) family. In terms of processing, proteolytically cleaved by a metalloprotease. Post-translationally, glycosylated. It is probable that most of the Ser residues in SSR1 and SSR2 are O-GlcNAcylated. Sequential glycosylation by sugar transferases are able to generate complex sugar polymorphisms.

The protein localises to the secreted. The protein resides in the cell wall. Its function is as follows. Mediates binding to human platelets, possibly through a receptor-ligand interaction. This is Serine-rich adhesin for platelets (sraP) from Staphylococcus haemolyticus (strain JCSC1435).